Reading from the N-terminus, the 491-residue chain is Glutamyl-tRNA(Gln) amidotransferase subunit A (491 aa).

Catalysis depends on charge relay system residues K78 and S158. The Acyl-ester intermediate role is filled by S182.

The protein belongs to the amidase family. GatA subfamily. As to quaternary structure, heterotrimer of A, B and C subunits.

The catalysed reaction is L-glutamyl-tRNA(Gln) + L-glutamine + ATP + H2O = L-glutaminyl-tRNA(Gln) + L-glutamate + ADP + phosphate + H(+). In terms of biological role, allows the formation of correctly charged Gln-tRNA(Gln) through the transamidation of misacylated Glu-tRNA(Gln) in organisms which lack glutaminyl-tRNA synthetase. The reaction takes place in the presence of glutamine and ATP through an activated gamma-phospho-Glu-tRNA(Gln). This Nitrobacter hamburgensis (strain DSM 10229 / NCIMB 13809 / X14) protein is Glutamyl-tRNA(Gln) amidotransferase subunit A.